Consider the following 229-residue polypeptide: Geodin cluster transcription factor (229 aa).

A DNA-binding region (zn(2)-C6 fungal-type) is located at residues 12 to 39 (CHACAASKVRCSKEKPTCSRCSKRGTTC). 2 disordered regions span residues 50–100 (KQLN…PGTT) and 141–169 (TANSEPLDAEGGITSSHNTSSNSPARPPT). Composition is skewed to polar residues over residues 51–71 (QLNNRSTAKESSNTTRTSLAT) and 153–164 (ITSSHNTSSNSP).

The protein localises to the nucleus. Its function is as follows. Transcription factor that regulates the expression of the gene cluster that mediates the biosynthesis of geodin, an intermediate in the biosynthesis of other natural products. This is Geodin cluster transcription factor from Aspergillus terreus (strain NIH 2624 / FGSC A1156).